The following is a 90-amino-acid chain: Probable Fe(2+)-trafficking protein (90 aa).

The protein belongs to the Fe(2+)-trafficking protein family.

Its function is as follows. Could be a mediator in iron transactions between iron acquisition and iron-requiring processes, such as synthesis and/or repair of Fe-S clusters in biosynthetic enzymes. The sequence is that of Probable Fe(2+)-trafficking protein from Albidiferax ferrireducens (strain ATCC BAA-621 / DSM 15236 / T118) (Rhodoferax ferrireducens).